Here is a 310-residue protein sequence, read N- to C-terminus: Thioredoxin reductase (310 aa).

34–41 (NGMQPGGQ) is a binding site for FAD. Cys-135 and Cys-138 are oxidised to a cystine. 281–290 (DVQDKIYRQA) contributes to the FAD binding site.

It belongs to the class-II pyridine nucleotide-disulfide oxidoreductase family. In terms of assembly, homodimer. Requires FAD as cofactor.

It is found in the cytoplasm. The enzyme catalyses [thioredoxin]-dithiol + NADP(+) = [thioredoxin]-disulfide + NADPH + H(+). The protein is Thioredoxin reductase (trxB) of Rickettsia conorii (strain ATCC VR-613 / Malish 7).